We begin with the raw amino-acid sequence, 241 residues long: Pyridoxine 5'-phosphate synthase (241 aa).

Asn-7 is a binding site for 3-amino-2-oxopropyl phosphate. 1-deoxy-D-xylulose 5-phosphate is bound at residue 9-10 (DH). 3-amino-2-oxopropyl phosphate is bound at residue Arg-18. Residue His-43 is the Proton acceptor of the active site. Positions 45 and 50 each coordinate 1-deoxy-D-xylulose 5-phosphate. Residue Glu-70 is the Proton acceptor of the active site. Thr-100 provides a ligand contact to 1-deoxy-D-xylulose 5-phosphate. The active-site Proton donor is the His-191. 3-amino-2-oxopropyl phosphate-binding positions include Gly-192 and 213-214 (GH).

It belongs to the PNP synthase family. Homooctamer; tetramer of dimers.

It localises to the cytoplasm. The catalysed reaction is 3-amino-2-oxopropyl phosphate + 1-deoxy-D-xylulose 5-phosphate = pyridoxine 5'-phosphate + phosphate + 2 H2O + H(+). It functions in the pathway cofactor biosynthesis; pyridoxine 5'-phosphate biosynthesis; pyridoxine 5'-phosphate from D-erythrose 4-phosphate: step 5/5. Functionally, catalyzes the complicated ring closure reaction between the two acyclic compounds 1-deoxy-D-xylulose-5-phosphate (DXP) and 3-amino-2-oxopropyl phosphate (1-amino-acetone-3-phosphate or AAP) to form pyridoxine 5'-phosphate (PNP) and inorganic phosphate. This Maridesulfovibrio salexigens (strain ATCC 14822 / DSM 2638 / NCIMB 8403 / VKM B-1763) (Desulfovibrio salexigens) protein is Pyridoxine 5'-phosphate synthase.